Here is a 280-residue protein sequence, read N- to C-terminus: MAAAPQAPKRGSIRKTRPLVVKTSLNNPYVISWSTLEREDIHFILQTLEAKFKLIGLQKIEDKKKRKKTALMKKQSCRPDIEISEDPKEPDGDVLVSGWTPVHVRKQLVIGVNEVTRALERNELLLVLVCKSVKPAIITSHLIQLSLSRTVPACQVPQLSERIAPVIGLKCVLALGSRKNTRDFADEVEAIIPRVPSLNVPWLPDRTQGPTDSLETEPSESQDNEILDTSFDDLTKLSKRKLAEGGQASAATLQPLKIKKLIPNPSKIRKPPKSKKSISK.

N-acetylalanine is present on Ala2. Ser12, Ser221, and Ser230 each carry phosphoserine. The tract at residues 202–227 (WLPDRTQGPTDSLETEPSESQDNEIL) is disordered. The segment covering 214–226 (LETEPSESQDNEI) has biased composition (acidic residues). Positions 254–280 (QPLKIKKLIPNPSKIRKPPKSKKSISK) are disordered. Over residues 267-280 (KIRKPPKSKKSISK) the composition is skewed to basic residues.

This sequence belongs to the eukaryotic ribosomal protein eL8 family. In terms of assembly, component of nuclear RNase P and RNase MRP ribonucleoproteins. RNase P consists of a catalytic RNA moiety and about 10 protein subunits; POP1, POP4, POP5, POP7, RPP14, RPP21, RPP25, RPP30, RPP38 and RPP40. Within the RNase P complex, POP1, POP7 and RPP25 form the 'finger' subcomplex, POP5, RPP14, RPP40 and homodimeric RPP30 form the 'palm' subcomplex, and RPP21, POP4 and RPP38 form the 'wrist' subcomplex. All subunits of the RNase P complex interact with the catalytic RNA. Several subunits of RNase P are also part of the RNase MRP complex. RNase MRP consists of a catalytic RNA moiety and about 8 protein subunits; POP1, POP7, RPP25, RPP30, RPP38, RPP40 and possibly also POP4 and POP5.

It localises to the nucleus. The protein localises to the nucleolus. Functionally, component of ribonuclease P, a ribonucleoprotein complex that generates mature tRNA molecules by cleaving their 5'-ends. Also a component of the MRP ribonuclease complex, which cleaves pre-rRNA sequences. The protein is Ribonuclease P protein subunit p38 (Rpp38) of Mus musculus (Mouse).